The primary structure comprises 233 residues: Biosynthetic peptidoglycan transglycosylase (233 aa).

A helical membrane pass occupies residues 8–28; that stretch reads LIALPVGIFIFFNAYVYGNII.

The protein belongs to the glycosyltransferase 51 family.

It localises to the cell inner membrane. It catalyses the reaction [GlcNAc-(1-&gt;4)-Mur2Ac(oyl-L-Ala-gamma-D-Glu-L-Lys-D-Ala-D-Ala)](n)-di-trans,octa-cis-undecaprenyl diphosphate + beta-D-GlcNAc-(1-&gt;4)-Mur2Ac(oyl-L-Ala-gamma-D-Glu-L-Lys-D-Ala-D-Ala)-di-trans,octa-cis-undecaprenyl diphosphate = [GlcNAc-(1-&gt;4)-Mur2Ac(oyl-L-Ala-gamma-D-Glu-L-Lys-D-Ala-D-Ala)](n+1)-di-trans,octa-cis-undecaprenyl diphosphate + di-trans,octa-cis-undecaprenyl diphosphate + H(+). Its pathway is cell wall biogenesis; peptidoglycan biosynthesis. In terms of biological role, peptidoglycan polymerase that catalyzes glycan chain elongation from lipid-linked precursors. In Neisseria meningitidis serogroup C / serotype 2a (strain ATCC 700532 / DSM 15464 / FAM18), this protein is Biosynthetic peptidoglycan transglycosylase.